A 76-amino-acid chain; its full sequence is EMBRYO SURROUNDING FACTOR 1-like protein 8 (76 aa).

An N-terminal signal peptide occupies residues 1–22 (MSSSQFFILCIILISSFPLHEC). Disulfide bonds link cysteine 38–cysteine 54, cysteine 43–cysteine 74, cysteine 52–cysteine 70, and cysteine 55–cysteine 63.

Belongs to the MEG family. In terms of tissue distribution, expressed in flowers.

This Arabidopsis thaliana (Mouse-ear cress) protein is EMBRYO SURROUNDING FACTOR 1-like protein 8 (ESFL8).